Consider the following 219-residue polypeptide: Probable oxidoreductase virH (219 aa).

The protein belongs to the oxidoreductase OpS7 family.

Its pathway is secondary metabolite biosynthesis. Probable oxidoreductase; part of the gene cluster that mediates the biosynthesis of virensols and trichoxide, fungal natural products that contain or are derived from a salicylaldehyde core. The pathway begins with the synthesis of the reduced chain in virensol C by the highly reducing polyketide synthase virA via condensation of one acetate and 8 malonate units. VirA has interesting programming rules since the first 2 ketides are fully reduced, the 3 following ketides undergo beta-dehydration, and the last 3 ketides are only reduced to beta-hydroxys to yield the trihydroxy portion. The production of aldehyde virensol C by virA alone is surprising, since virA does not contain a reductase (R) domain that is typically associated with reductive product release in HRPKS. The cupin-domain enzyme virC is involved in enhancing virA product turnover. The short-chain dehydrogenase virB then oxidizes the C-7 alcohol of virensol C to a ketone, yielding virensol D. Virensol D is further transformed to salicylaldehyde 5-deoxyaurocitrin by the short-chain dehydrogenase virD. VirD catalyzes the dehydrogenation of C-3 to form the beta-ketone aldehyde, which is followed by the generation of the nucleophilic C-2 that is required for the intramolecular aldol condensation between C-2 and C-7, itself followed by dehydration and aromatization which leads to salicylaldehyde 5-deoxyaurocitrin. While the dehydrogenation of virensol D is definitely catalyzed by virD, the aldol condensation and dehydration may be uncatalyzed or assisted by virD. The short chain dehydrogenase virG then converts salicylaldehyde 5-deoxyaurocitrin into virensol B which is further hydroxylated by the cytochrome P450 monooxygenase virE to yield the hydroquinone virensol A. VirI then may oxidize virensol A to form the quinone, while virH performs the epoxidation. Finally, the two remaining short-chain dehydrogenases, virK and virL, are probably responsible for reducing the ketones to the corresponding alcohols to furnish the epoxycyclohexanol structure in trichoxide. This Hypocrea virens (strain Gv29-8 / FGSC 10586) (Gliocladium virens) protein is Probable oxidoreductase virH.